A 268-amino-acid polypeptide reads, in one-letter code: Uronate dehydrogenase (268 aa).

Residues 17-18 (GL), 37-39 (DIS), 55-56 (DL), and 75-79 (FGGVS) each bind NAD(+). Substrate contacts are provided by residues Ser-79 and 115–117 (SNH). Tyr-140 functions as the Proton acceptor in the catalytic mechanism. Lys-144 provides a ligand contact to NAD(+). Ser-169 contacts substrate. Residue Ser-170 participates in NAD(+) binding. Arg-178 lines the substrate pocket.

The protein belongs to the NAD(P)-dependent epimerase/dehydratase family. As to quaternary structure, homohexamer.

The enzyme catalyses beta-D-galacturonate + NAD(+) = D-galactaro-1,5-lactone + NADH + H(+). It catalyses the reaction beta-D-glucuronate + NAD(+) = D-glucaro-1,5-lactone + NADH + H(+). It participates in carbohydrate acid metabolism; D-galacturonate degradation via prokaryotic oxidative pathway. Functionally, catalyzes the oxidation of beta-D-galacturonate and beta-D-glucuronate to galactarate and D-glucarate, respectively. This Pseudomonas putida (strain ATCC 47054 / DSM 6125 / CFBP 8728 / NCIMB 11950 / KT2440) protein is Uronate dehydrogenase (udh).